The primary structure comprises 66 residues: Type 3 secretion system chaperone YscE (66 aa).

This sequence belongs to the YscE family. As to quaternary structure, component of the heterodimeric YscE-YscG chaperone. The YscE-YscG chaperone forms a stable ternary complex with YscF/SctF.

The protein resides in the cytoplasm. In terms of biological role, chaperone of the type III secretion system (T3SS), also called injectisome, which is used to inject bacterial effector proteins into eukaryotic host cells. Along with YscG, prevents premature polymerization of the YscF/SctF needle protein within the cytoplasm. Required for Yop secretion. In Yersinia enterocolitica, this protein is Type 3 secretion system chaperone YscE.